A 538-amino-acid polypeptide reads, in one-letter code: MSIKVYDTTLRDGAQAFGVSFSLEDKIRIAEALDDLGVHYLEGGWPGSNPKDIAFFEAVKGMNFKNLKVAAFSSTRRPDVKIEEDANIQTLIKAETPVYTIFGKSWDLHVEKALRTTLEENLKMIYDTVSYLKRFADEVIYDAEHFFDGYKANREYALKTLKVAEEAGADCLVLADTNGGTLPHEIEEIIEDVKKHVKAPLGIHAHNDSDVAVANTLAAVRKGAVHVQGTINGLGERCGNANLCSVIPNLVLKMGLEVIPKENLKKLFDVAHLVAELSGRPHIENMPYVGDYAFAHKGGVHVSAIKRDPRTYEHIDPELVGNRRIISISELSGKSNVLEKIKEMGFEIDESSPKVREILKKIKELEAQGYHFEGAEASFELLVRDMLGKRKKYFEFLGFTVMTIKNRDEESFSEATVKVRVPDEVAKRLGHDEPFEHTAAEGEGPVEALDRAVRKALEKFYPSLKDTKLTDYKVRILNEQAGTKATTRVLIESSDGKRRWGTVGVSPNIIEASWTALLESLEYKLHKDEEEMRNDEEN.

A Pyruvate carboxyltransferase domain is found at Ile-3–Phe-268.

The protein belongs to the alpha-IPM synthase/homocitrate synthase family.

The enzyme catalyses pyruvate + acetyl-CoA + H2O = (3R)-citramalate + CoA + H(+). It participates in amino-acid biosynthesis; L-isoleucine biosynthesis; 2-oxobutanoate from pyruvate: step 1/3. Functionally, catalyzes the condensation of pyruvate and acetyl-coenzyme A to form (R)-citramalate. This is (R)-citramalate synthase from Thermotoga maritima (strain ATCC 43589 / DSM 3109 / JCM 10099 / NBRC 100826 / MSB8).